We begin with the raw amino-acid sequence, 602 residues long: NAD-reducing hydrogenase HoxS subunit alpha (602 aa).

219–228 (GRGGAGFSTG) is an NAD(+) binding site. An FMN-binding site is contributed by 332–379 (GAGAYICGDESALIESCEGKRGTPRVKPPFPVQQGYLGKPTSVNNVET). [4Fe-4S] cluster is bound by residues Cys-499, Cys-502, Cys-505, and Cys-545.

It belongs to the complex I 51 kDa subunit family. As to quaternary structure, tetramer of an alpha and a gamma subunits (flavin-containing dimer), and a delta and a nickel-containing beta subunit (hydrogenase dimer). It depends on FMN as a cofactor. [4Fe-4S] cluster is required as a cofactor.

The protein localises to the cytoplasm. The enzyme catalyses H2 + NAD(+) = NADH + H(+). Functionally, subunits alpha and gamma of HoxS constitute an NADH--oxidoreductase. The sequence is that of NAD-reducing hydrogenase HoxS subunit alpha (hoxF) from Cupriavidus necator (strain ATCC 17699 / DSM 428 / KCTC 22496 / NCIMB 10442 / H16 / Stanier 337) (Ralstonia eutropha).